The chain runs to 385 residues: Cotranscriptional regulator ARB2A homolog (385 aa).

Disordered stretches follow at residues 1–65 and 220–239; these read MSDI…NGEE and EEQKEKAKEEEEKKDDNGKL. Residues 52–62 are compositionally biased toward low complexity; it reads NNNNNNSNNSN. Over residues 220–238 the composition is skewed to basic and acidic residues; that stretch reads EEQKEKAKEEEEKKDDNGK.

This sequence belongs to the ARB2A family.

The sequence is that of Cotranscriptional regulator ARB2A homolog from Dictyostelium discoideum (Social amoeba).